The following is a 426-amino-acid chain: Tyrosine--tRNA ligase (426 aa).

Tyr38 contributes to the L-tyrosine binding site. The 'HIGH' region signature appears at Pro43 to Ser52. L-tyrosine-binding residues include Tyr176 and Gln180. Residues Lys236–Thr240 carry the 'KMSKS' region motif. Lys239 contacts ATP. The S4 RNA-binding domain occupies Gln359 to Lys426.

The protein belongs to the class-I aminoacyl-tRNA synthetase family. TyrS type 1 subfamily. As to quaternary structure, homodimer.

The protein resides in the cytoplasm. The catalysed reaction is tRNA(Tyr) + L-tyrosine + ATP = L-tyrosyl-tRNA(Tyr) + AMP + diphosphate + H(+). Catalyzes the attachment of tyrosine to tRNA(Tyr) in a two-step reaction: tyrosine is first activated by ATP to form Tyr-AMP and then transferred to the acceptor end of tRNA(Tyr). In Aliivibrio fischeri (strain ATCC 700601 / ES114) (Vibrio fischeri), this protein is Tyrosine--tRNA ligase.